The sequence spans 47 residues: RVCMGKSQHHSFPCISDRLCSNECVKEDGGWTAGYCHLRYCRCQKAC.

Cystine bridges form between C3-C47, C14-C36, C20-C41, and C24-C43.

This sequence belongs to the DEFL family.

The chain is Defensin-like protein 2 from Zea mays (Maize).